The chain runs to 76 residues: Putative Fe(2+) transport protein A (76 aa).

Belongs to the FeoA family.

Might be involved in Fe(2+) ion uptake. The polypeptide is Putative Fe(2+) transport protein A (Helicobacter pylori (strain ATCC 700392 / 26695) (Campylobacter pylori)).